The sequence spans 183 residues: Translation initiation factor IF-3 (183 aa).

This sequence belongs to the IF-3 family. As to quaternary structure, monomer.

Its subcellular location is the cytoplasm. Functionally, IF-3 binds to the 30S ribosomal subunit and shifts the equilibrium between 70S ribosomes and their 50S and 30S subunits in favor of the free subunits, thus enhancing the availability of 30S subunits on which protein synthesis initiation begins. The chain is Translation initiation factor IF-3 from Pseudomonas fluorescens (strain SBW25).